Consider the following 317-residue polypeptide: Transcription factor EC (317 aa).

The disordered stretch occupies residues 1-44 (MTLDHQILNQSFKRSHPPTPSSELLVQHGHPSPESDTGLTGNPL). Residues 1 to 90 (MTLDHQILNQ…GLTSASCPSS (90 aa)) form a necessary for transcriptional transactivation region. The span at 34 to 43 (ESDTGLTGNP) shows a compositional bias: polar residues. One can recognise a bHLH domain in the interval 110–163 (QKKDNHNLIERRRRYNINYRIKELGTLIPKSNDPDMRWNKGTILKASVEYIKWL). The tract at residues 241-317 (TSPELCDQAM…SFSSEDGDEL (77 aa)) is necessary for transcriptional transactivation. The segment at 297–317 (PAVSKESSRRSSFSSEDGDEL) is disordered.

This sequence belongs to the MiT/TFE family. As to quaternary structure, homodimer. Forms heterodimers with MITF and TFE3. Interacts with MITF.

It is found in the nucleus. Functionally, transcriptional regulator that acts as a repressor or an activator. Acts as a transcriptional repressor on minimal promoter containing element F (that includes an E-box sequence). Binds to element F in an E-box sequence-specific manner. Acts as a transcriptional transactivator on the proximal promoter region of the tartrate-resistant acid phosphatase (TRAP) E-box containing promoter. Collaborates with MITF in target gene activation. Acts as a transcriptional repressor on minimal promoter containing mu E3 enhancer sequence. Binds to mu E3 DNA sequence of the immunoglobulin heavy-chain gene enhancer. Binds DNA in a homo- or heterodimeric form. In Bos taurus (Bovine), this protein is Transcription factor EC (TFEC).